The following is a 203-amino-acid chain: Twist-related protein 1 (203 aa).

Low complexity predominate over residues 1–18; sequence MMQDVSSSPVSPADDSLS. A disordered region spans residues 1 to 105; sequence MMQDVSSSPV…SGGGSPQSYE (105 aa). The span at 34–43 shows a compositional bias: basic residues; sequence RGGRKRRSSR. Gly residues-rich tracts occupy residues 46–65 and 80–100; these read AGGG…GGDE and GCGG…GGGS. Positions 109–160 constitute a bHLH domain; sequence TQRVMANVRGRQRTQSLNEAFAALRKIIPTLPSDKLSKIQTLKLAARYIDFL. The interval 162–192 is sufficient for transactivation activity; that stretch reads QVLQSDELDSKMASCSYVAHERLSYAFSVWR.

In terms of assembly, efficient DNA binding requires dimerization with another bHLH protein. Homodimer or heterodimer with E proteins such as TCF3. ID1 binds preferentially to TCF3 but does not interact efficiently with TWIST1 so ID1 levels control the amount of TCF3 available to dimerize with TWIST and thus determine the type of dimer formed.

It is found in the nucleus. Acts as a transcriptional regulator. Inhibits myogenesis by sequestrating E proteins, inhibiting trans-activation by MEF2, and inhibiting DNA-binding by MYOD1 through physical interaction. This interaction probably involves the basic domains of both proteins. Also represses expression of pro-inflammatory cytokines such as TNFA and IL1B. Regulates cranial suture patterning and fusion. Activates transcription as a heterodimer with E proteins. Regulates gene expression differentially, depending on dimer composition. Homodimers induce expression of FGFR2 and POSTN while heterodimers repress FGFR2 and POSTN expression and induce THBS1 expression. Heterodimerization is also required for osteoblast differentiation. Represses the activity of the circadian transcriptional activator: NPAS2-BMAL1 heterodimer. In Callithrix jacchus (White-tufted-ear marmoset), this protein is Twist-related protein 1 (TWIST1).